Consider the following 200-residue polypeptide: Transcription elongation factor A protein-like 3 (200 aa).

The disordered stretch occupies residues 1–200; it reads MEKPYNKNEG…QRGLHDIPYL (200 aa). Residues 20 to 36 show a composition bias toward acidic residues; that stretch reads DEVEPDDEGKSDEEEKP. Ser-30 carries the phosphoserine modification. A compositionally biased stretch (basic and acidic residues) spans 37–50; sequence DVEGKTECEGKRED. Residues 51-64 are compositionally biased toward acidic residues; sequence EGEPGDEGQLEDEG. Phosphoserine is present on Ser-65. 3 stretches are compositionally biased toward basic and acidic residues: residues 65–80, 96–107, and 115–154; these read SQEKQGRSEGEGKPQG, AAEKRPAEDYVP, and DRGTDDSPKDSQEDLQERHLSSEEMMRECGDVSRAQEELR.

It belongs to the TFS-II family. TFA subfamily.

The protein resides in the nucleus. Its function is as follows. May be involved in transcriptional regulation. This chain is Transcription elongation factor A protein-like 3 (TCEAL3), found in Homo sapiens (Human).